The following is a 346-amino-acid chain: Glycerol-1-phosphate dehydrogenase [NAD(P)+] (346 aa).

NAD(+) contacts are provided by residues 93–97 and 115–118; these read GSIID and TTAS. Aspartate 120 is a substrate binding site. Position 124 (serine 124) interacts with NAD(+). Aspartate 167 contacts substrate. Residues aspartate 167 and histidine 247 each contribute to the Zn(2+) site. Histidine 251 provides a ligand contact to substrate. Residue histidine 263 coordinates Zn(2+).

The protein belongs to the glycerol-1-phosphate dehydrogenase family. The cofactor is Zn(2+).

It is found in the cytoplasm. It catalyses the reaction sn-glycerol 1-phosphate + NAD(+) = dihydroxyacetone phosphate + NADH + H(+). The catalysed reaction is sn-glycerol 1-phosphate + NADP(+) = dihydroxyacetone phosphate + NADPH + H(+). Its pathway is membrane lipid metabolism; glycerophospholipid metabolism. Functionally, catalyzes the NAD(P)H-dependent reduction of dihydroxyacetonephosphate (DHAP or glycerone phosphate) to glycerol 1-phosphate (G1P). The G1P thus generated is used as the glycerophosphate backbone of phospholipids in the cellular membranes of Archaea. This Pyrococcus horikoshii (strain ATCC 700860 / DSM 12428 / JCM 9974 / NBRC 100139 / OT-3) protein is Glycerol-1-phosphate dehydrogenase [NAD(P)+].